The chain runs to 617 residues: tRNA uridine 5-carboxymethylaminomethyl modification enzyme MnmG (617 aa).

FAD is bound by residues 9-14 (GAGHAG), valine 121, and threonine 176. 269-283 (GPRYCPSIEDKFVRF) is a binding site for NAD(+). FAD is bound at residue glutamine 366.

This sequence belongs to the MnmG family. Homodimer. Heterotetramer of two MnmE and two MnmG subunits. FAD serves as cofactor.

It is found in the cytoplasm. Its function is as follows. NAD-binding protein involved in the addition of a carboxymethylaminomethyl (cmnm) group at the wobble position (U34) of certain tRNAs, forming tRNA-cmnm(5)s(2)U34. This chain is tRNA uridine 5-carboxymethylaminomethyl modification enzyme MnmG, found in Acholeplasma laidlawii (strain PG-8A).